A 254-amino-acid polypeptide reads, in one-letter code: Adenosylcobinamide-GDP ribazoletransferase (254 aa).

7 helical membrane-spanning segments follow: residues 29 to 49 (LFWF…LGYF), 50 to 70 (TSLL…GIAL), 98 to 118 (IMKD…MMLL), 121 to 141 (IAIL…GVLL), 170 to 190 (AGVV…FPLL), 198 to 218 (LYAV…TGLL), and 230 to 250 (VLGA…ALSA).

The protein belongs to the CobS family. It depends on Mg(2+) as a cofactor.

It localises to the cell inner membrane. It catalyses the reaction alpha-ribazole + adenosylcob(III)inamide-GDP = adenosylcob(III)alamin + GMP + H(+). It carries out the reaction alpha-ribazole 5'-phosphate + adenosylcob(III)inamide-GDP = adenosylcob(III)alamin 5'-phosphate + GMP + H(+). It functions in the pathway cofactor biosynthesis; adenosylcobalamin biosynthesis; adenosylcobalamin from cob(II)yrinate a,c-diamide: step 7/7. In terms of biological role, joins adenosylcobinamide-GDP and alpha-ribazole to generate adenosylcobalamin (Ado-cobalamin). Also synthesizes adenosylcobalamin 5'-phosphate from adenosylcobinamide-GDP and alpha-ribazole 5'-phosphate. This chain is Adenosylcobinamide-GDP ribazoletransferase, found in Pelodictyon phaeoclathratiforme (strain DSM 5477 / BU-1).